The chain runs to 292 residues: MKLKSLLSVFTISIVALTSACSTKNAGPSADPDKLIVALIPDENAATVIQDNQGLKDYLTEAFDKEIELVVTTDYSSMIEAARNDRLDLAYFGPLSYVLAKAVSDIEPFAARIKGGTKTYNSCIIGNTKKGVTSFDDIKGTTFALGDPASTSSRLFPELTLAENGLTKGKDFQGVFLGSHDAVALAVQNGNAQAGGMACPILKSLKKKGVIDPSKVTTIAQSSPIPQYPWTMRSTLSPELKEKIRFTFLDLDSDKVLKPFNADGFASITDSDYDGIRKAGKLLGLDLSKFVK.

The first 20 residues, 1 to 20 (MKLKSLLSVFTISIVALTSA), serve as a signal peptide directing secretion. The N-palmitoyl cysteine moiety is linked to residue C21. C21 carries the S-diacylglycerol cysteine lipid modification.

The protein belongs to the phosphate/phosphite/phosphonate binding protein family. As to quaternary structure, the complex may be composed of two ATP-binding proteins (PhnC2), two transmembrane proteins (PhnE2) and a solute-binding protein (PhnD2).

The protein resides in the cell membrane. In terms of biological role, probably part of the ABC transporter complex PhnC2D2E2. Binds strongly to methylphosphonate (MPn), ethylphosphonate (EPn) and inorganic phosphite. The polypeptide is Probable ABC transporter phosphonate/phosphite binding protein PhnD2 (Prochlorococcus marinus (strain MIT 9301)).